The sequence spans 107 residues: Putative nucleosome assembly protein 1-like 6 (107 aa).

It belongs to the nucleosome assembly protein (NAP) family.

This chain is Putative nucleosome assembly protein 1-like 6, found in Homo sapiens (Human).